The primary structure comprises 202 residues: Small ribosomal subunit protein uS4 (202 aa).

The segment at L15 to R42 is disordered. Positions N90–N152 constitute an S4 RNA-binding domain.

Belongs to the universal ribosomal protein uS4 family. As to quaternary structure, part of the 30S ribosomal subunit. Contacts protein S5. The interaction surface between S4 and S5 is involved in control of translational fidelity.

One of the primary rRNA binding proteins, it binds directly to 16S rRNA where it nucleates assembly of the body of the 30S subunit. Its function is as follows. With S5 and S12 plays an important role in translational accuracy. This chain is Small ribosomal subunit protein uS4, found in Parasynechococcus marenigrum (strain WH8102).